The chain runs to 171 residues: Adenine phosphoribosyltransferase (171 aa).

The protein belongs to the purine/pyrimidine phosphoribosyltransferase family. In terms of assembly, homodimer.

It is found in the cytoplasm. It carries out the reaction AMP + diphosphate = 5-phospho-alpha-D-ribose 1-diphosphate + adenine. The protein operates within purine metabolism; AMP biosynthesis via salvage pathway; AMP from adenine: step 1/1. Functionally, catalyzes a salvage reaction resulting in the formation of AMP, that is energically less costly than de novo synthesis. This is Adenine phosphoribosyltransferase from Ruminiclostridium cellulolyticum (strain ATCC 35319 / DSM 5812 / JCM 6584 / H10) (Clostridium cellulolyticum).